Reading from the N-terminus, the 415-residue chain is Tyrosine-protein phosphatase non-receptor type 2 (415 aa).

The region spanning I5–G275 is the Tyrosine-protein phosphatase domain. The residue at position 22 (Y22) is a Phosphotyrosine. At S52 the chain carries Phosphoserine. Y68 bears the Phosphotyrosine mark. Substrate-binding positions include D182, C216–R222, and Q260. The active-site Phosphocysteine intermediate is C216. C216 is subject to S-nitrosocysteine. A phosphoserine mark is found at S293, S298, and S304. Residues E346 to L415 form an endoplasmic reticulum location region. A mediates interaction with STX17 region spans residues E376–L415.

It belongs to the protein-tyrosine phosphatase family. Non-receptor class 1 subfamily. In terms of assembly, interacts with RMDN3. Isoform 1 interacts with TMED9. Isoform 1 interacts with STX17; dephosphorylates STX17. Interacts with ITGA1 (via cytoplasmic domain); activates the phosphatase activity towards EGFR. Interacts with TRAF2; probably involved in tumor necrosis factor-mediated signaling. Interacts with MET. Interacts with FAM220A and STAT3; interaction with FAM220A promotes interaction of PTPN2 with transcriptional activator STAT3, leading to dephosphorylation of STAT3 by PTPN2 and negative regulation of STAT3 transcriptional activator activity. Specifically phosphorylated in a cell cycle-dependent manner by cyclin-dependent kinases CDK1 and CDK2. Probably activated through phosphorylation by PKR. Ubiquitously expressed. Isoform 2 is probably the major isoform. Isoform 1 is expressed in T-cells and in placenta.

It is found in the endoplasmic reticulum. It localises to the endoplasmic reticulum-Golgi intermediate compartment. The protein localises to the nucleus. Its subcellular location is the cytoplasm. The protein resides in the cell membrane. The catalysed reaction is O-phospho-L-tyrosyl-[protein] + H2O = L-tyrosyl-[protein] + phosphate. Non-receptor type tyrosine-specific phosphatase that dephosphorylates receptor protein tyrosine kinases including INSR, EGFR, CSF1R, PDGFR. Also dephosphorylates non-receptor protein tyrosine kinases like JAK1, JAK2, JAK3, Src family kinases, STAT1, STAT3 and STAT6 either in the nucleus or the cytoplasm. Negatively regulates numerous signaling pathways and biological processes like hematopoiesis, inflammatory response, cell proliferation and differentiation, and glucose homeostasis. Plays a multifaceted and important role in the development of the immune system. Functions in T-cell receptor signaling through dephosphorylation of FYN and LCK to control T-cells differentiation and activation. Dephosphorylates CSF1R, negatively regulating its downstream signaling and macrophage differentiation. Negatively regulates cytokine (IL2/interleukin-2 and interferon)-mediated signaling through dephosphorylation of the cytoplasmic kinases JAK1, JAK3 and their substrate STAT1, that propagate signaling downstream of the cytokine receptors. Also regulates the IL6/interleukin-6 and IL4/interleukin-4 cytokine signaling through dephosphorylation of STAT3 and STAT6 respectively. In addition to the immune system, it is involved in anchorage-dependent, negative regulation of EGF-stimulated cell growth. Activated by the integrin ITGA1/ITGB1, it dephosphorylates EGFR and negatively regulates EGF signaling. Dephosphorylates PDGFRB and negatively regulates platelet-derived growth factor receptor-beta signaling pathway and therefore cell proliferation. Negatively regulates tumor necrosis factor-mediated signaling downstream via MAPK through SRC dephosphorylation. May also regulate the hepatocyte growth factor receptor signaling pathway through dephosphorylation of the hepatocyte growth factor receptor MET. Also plays an important role in glucose homeostasis. For instance, negatively regulates the insulin receptor signaling pathway through the dephosphorylation of INSR and control gluconeogenesis and liver glucose production through negative regulation of the IL6 signaling pathways. May also bind DNA. The chain is Tyrosine-protein phosphatase non-receptor type 2 (PTPN2) from Homo sapiens (Human).